The sequence spans 131 residues: Aspartate 1-decarboxylase (131 aa).

Serine 25 acts as the Schiff-base intermediate with substrate; via pyruvic acid in catalysis. The residue at position 25 (serine 25) is a Pyruvic acid (Ser). Residue threonine 57 participates in substrate binding. The active-site Proton donor is the tyrosine 58. Position 73–75 (73–75 (GAA)) interacts with substrate.

The protein belongs to the PanD family. As to quaternary structure, heterooctamer of four alpha and four beta subunits. The cofactor is pyruvate. Is synthesized initially as an inactive proenzyme, which is activated by self-cleavage at a specific serine bond to produce a beta-subunit with a hydroxyl group at its C-terminus and an alpha-subunit with a pyruvoyl group at its N-terminus.

Its subcellular location is the cytoplasm. It catalyses the reaction L-aspartate + H(+) = beta-alanine + CO2. Its pathway is cofactor biosynthesis; (R)-pantothenate biosynthesis; beta-alanine from L-aspartate: step 1/1. Catalyzes the pyruvoyl-dependent decarboxylation of aspartate to produce beta-alanine. This is Aspartate 1-decarboxylase from Anaeromyxobacter sp. (strain Fw109-5).